Reading from the N-terminus, the 252-residue chain is Transmembrane ascorbate-dependent reductase CYB561 (252 aa).

The residue at position 1 (Met-1) is an N-acetylmethionine. The Cytoplasmic portion of the chain corresponds to 1-17 (MESPAGRTPAPGALPYY). Residues 18–38 (VAFSQLLGLTVVAVTGAWLGA) traverse the membrane as a helical segment. One can recognise a Cytochrome b561 domain in the interval 20-221 (FSQLLGLTVV…FGAVVLYILT (202 aa)). The Vesicular segment spans residues 39-52 (YRGGIAWESALQFN). Residues 53–73 (VHPLCMIIGLVFLQGDALLVY) traverse the membrane as a helical segment. Heme b is bound by residues His-54, Arg-74, and Lys-81. At 74 to 85 (RVFRNEAKRTTK) the chain is on the cytoplasmic side. L-ascorbate-binding residues include Lys-81 and Lys-85. The helical transmembrane segment at 86-106 (ILHGLLHVLAFVIALVGLVAV) threads the bilayer. Heme b-binding positions include His-88, 117-120 (DLYS), and His-122. At 107–125 (FDYHRKKGIADLYSLHSWC) the chain is on the vesicular side. The chain crosses the membrane as a helical span at residues 126-146 (GILVFVLFLAQWLVGLGFFLF). Residues 147–159 (PGASFSLRSRYRP) lie on the Cytoplasmic side of the membrane. Arg-154 serves as a coordination point for L-ascorbate. The chain crosses the membrane as a helical span at residues 160–180 (QHVFFGAAIFLLSVGTALLGL). Heme b-binding residues include His-161 and Glu-182. Topologically, residues 181–199 (KEALLFQLGTKYSAFESEG) are vesicular. The helical transmembrane segment at 200–220 (VLANVLGLLLVAFGAVVLYIL) threads the bilayer. Residues 221–252 (TRADWKRPLQAEEQALSMDFKTLTEGDSPSSQ) lie on the Cytoplasmic side of the membrane. Lys-226 provides a ligand contact to heme b. Residues Ser-248 and Ser-250 each carry the phosphoserine modification.

Requires heme b as cofactor.

The protein localises to the cytoplasmic vesicle. Its subcellular location is the secretory vesicle. The protein resides in the chromaffin granule membrane. It catalyses the reaction monodehydro-L-ascorbate radical(out) + L-ascorbate(in) = monodehydro-L-ascorbate radical(in) + L-ascorbate(out). In terms of biological role, transmembrane reductase that uses ascorbate as an electron donor in the cytoplasm and transfers electrons across membranes to reduce monodehydro-L-ascorbate radical in the lumen of secretory vesicles. It is therefore involved the regeneration and homeostasis within secretory vesicles of ascorbate which in turn provides reducing equivalents needed to support the activity of intravesicular enzymes. The protein is Transmembrane ascorbate-dependent reductase CYB561 (CYB561) of Sus scrofa (Pig).